The chain runs to 333 residues: tRNA N6-adenosine threonylcarbamoyltransferase (333 aa).

Fe cation-binding residues include H111 and H115. Substrate is bound by residues 134–138 (LVSGG), D167, G180, and N272. D300 serves as a coordination point for Fe cation.

It belongs to the KAE1 / TsaD family. Fe(2+) is required as a cofactor.

Its subcellular location is the cytoplasm. The enzyme catalyses L-threonylcarbamoyladenylate + adenosine(37) in tRNA = N(6)-L-threonylcarbamoyladenosine(37) in tRNA + AMP + H(+). Its function is as follows. Required for the formation of a threonylcarbamoyl group on adenosine at position 37 (t(6)A37) in tRNAs that read codons beginning with adenine. Is involved in the transfer of the threonylcarbamoyl moiety of threonylcarbamoyl-AMP (TC-AMP) to the N6 group of A37, together with TsaE and TsaB. TsaD likely plays a direct catalytic role in this reaction. This Hamiltonella defensa subsp. Acyrthosiphon pisum (strain 5AT) protein is tRNA N6-adenosine threonylcarbamoyltransferase.